A 415-amino-acid polypeptide reads, in one-letter code: Dynein assembly factor with WD repeat domains 1 (415 aa).

WD repeat units lie at residues 90 to 129, 132 to 174, 175 to 214, 217 to 256, 259 to 298, 301 to 340, 343 to 384, and 386 to 415; these read AHIL…ELHT, GHRN…HTFR, GHTA…EVVT, GHLA…KVHT, GHCA…CVAT, GHDD…CITK, GHEG…QVLE, and HTDE…RIWR.

It belongs to the WD repeat WDR69 family. Interacts with IFT46.

The protein localises to the cytoplasm. It is found in the cytoskeleton. It localises to the flagellum basal body. The protein resides in the flagellum axoneme. Functionally, required for axonemal dynein assembly and ciliary motility in ciliated organs, including Kupffer's vesicle, during embryogenesis. Facilitates the onset of robust cilia motility during development. This chain is Dynein assembly factor with WD repeat domains 1 (Daw1), found in Rattus norvegicus (Rat).